The chain runs to 448 residues: MSDIRHSLLRRDALSAAKEVLYHLDIYFSSQLQSAPLPIVDKGSVELLEEFVFQVPKERGAQPKRLNSLQELQLLEIMCSYFQEQSKDSVRQIIFSSLFSPQGNKADDSRMSLLGKLVSMAVAVCRIPVLECAASWLQRTPVVYCVRLARVLVEDYCCLVPGSVQTLKQIFSASPRFCCQFITSVTALYDLSSDDLIPPLDLLEMIVSWIFEDPRLILITFLNTPIAANLPIGFLELTPLIGLIRWCVKAPLAYKRKKPCLSNGHISHKVAKDSGASTDRDSHLLYSKLHLSVLQVLMTLQLHLTEKNLYGRLGLILFDHMVPLVEEINRLADELNPLNASQEIELALDRLAQALQVAMTSGALLCTRDDLRTLCSRLPHNNLLQLVISGPVQQSPHTALPPGFYPHIHTPPLAYGAVPAHPAAHPALPTHPGHTFISGVTFPFRPIR.

This sequence belongs to the Integrator subunit 15 family. Component of the Integrator complex, composed of core subunits INTS1, INTS2, INTS3, INTS4, INTS5, INTS6, INTS7, INTS8, INTS9/RC74, INTS10, INTS11/CPSF3L, INTS12, INTS13, INTS14 and INTS15. The core complex associates with protein phosphatase 2A subunits PPP2CA and PPP2R1A, to form the Integrator-PP2A (INTAC) complex. INTS15 is part of the tail subcomplex, composed of INTS10, INTS13, INTS14 and INTS15.

The protein resides in the nucleus. The protein localises to the chromosome. Functionally, component of the integrator complex, a multiprotein complex that terminates RNA polymerase II (Pol II) transcription in the promoter-proximal region of genes. The integrator complex provides a quality checkpoint during transcription elongation by driving premature transcription termination of transcripts that are unfavorably configured for transcriptional elongation: the complex terminates transcription by (1) catalyzing dephosphorylation of the C-terminal domain (CTD) of Pol II subunit POLR2A/RPB1 and SUPT5H/SPT5, (2) degrading the exiting nascent RNA transcript via endonuclease activity and (3) promoting the release of Pol II from bound DNA. The integrator complex is also involved in terminating the synthesis of non-coding Pol II transcripts, such as enhancer RNAs (eRNAs), small nuclear RNAs (snRNAs), telomerase RNAs and long non-coding RNAs (lncRNAs). INTS15 is part of the integrator tail module that acts as a platform for the recruitment of transcription factors at promoters. Within the integrator complex, INTS15 is required to bridge different integrator modules. The protein is Integrator complex subunit 15 of Mus musculus (Mouse).